The chain runs to 194 residues: HTH-type transcriptional regulator BetI (194 aa).

The HTH tetR-type domain maps to 8-68 (PLRRRELIDA…ATMRHLLREL (61 aa)). A DNA-binding region (H-T-H motif) is located at residues 31–50 (TVAQIAHEAGVSPALAHHYF).

Its pathway is amine and polyamine biosynthesis; betaine biosynthesis via choline pathway [regulation]. Its function is as follows. Repressor involved in the biosynthesis of the osmoprotectant glycine betaine. It represses transcription of the choline transporter BetT and the genes of BetAB involved in the synthesis of glycine betaine. In Brucella anthropi (strain ATCC 49188 / DSM 6882 / CCUG 24695 / JCM 21032 / LMG 3331 / NBRC 15819 / NCTC 12168 / Alc 37) (Ochrobactrum anthropi), this protein is HTH-type transcriptional regulator BetI.